We begin with the raw amino-acid sequence, 385 residues long: Succinate--CoA ligase [ADP-forming] subunit beta (385 aa).

In terms of domain architecture, ATP-grasp spans Lys-9 to Glu-244. ATP is bound by residues Lys-46, Gly-53–Gly-55, Glu-99, Cys-102, and Glu-107. Residues Asn-199 and Asp-213 each coordinate Mg(2+). Ser-220 is modified (phosphoserine). Residues Asn-264 and Gly-321 to Met-323 each bind substrate.

It belongs to the succinate/malate CoA ligase beta subunit family. In terms of assembly, heterotetramer of two alpha and two beta subunits. Interacts with BrxC. Mg(2+) is required as a cofactor.

The enzyme catalyses succinate + ATP + CoA = succinyl-CoA + ADP + phosphate. The catalysed reaction is GTP + succinate + CoA = succinyl-CoA + GDP + phosphate. Its pathway is carbohydrate metabolism; tricarboxylic acid cycle; succinate from succinyl-CoA (ligase route): step 1/1. Functionally, succinyl-CoA synthetase functions in the citric acid cycle (TCA), coupling the hydrolysis of succinyl-CoA to the synthesis of either ATP or GTP and thus represents the only step of substrate-level phosphorylation in the TCA. The beta subunit provides nucleotide specificity of the enzyme and binds the substrate succinate, while the binding sites for coenzyme A and phosphate are found in the alpha subunit. This is Succinate--CoA ligase [ADP-forming] subunit beta from Bacillus subtilis (strain 168).